A 321-amino-acid polypeptide reads, in one-letter code: uncharacterized protein (321 aa).

This is an uncharacterized protein from Aquifex aeolicus (strain VF5).